The sequence spans 112 residues: Nitrogen regulatory protein P-II (112 aa).

Tyr51 is modified (O-UMP-tyrosine).

Belongs to the P(II) protein family. As to quaternary structure, homotrimer.

In terms of biological role, in nitrogen-limiting conditions, when the ratio of Gln to 2-ketoglutarate decreases, P-II is uridylylated to P-II-UMP. P-II-UMP allows the deadenylation of glutamine synthetase (GS), thus activating the enzyme. Conversely, in nitrogen excess P-II is deuridylated and promotes the adenylation of GS. P-II indirectly controls the transcription of the GS gene (glnA). P-II prevents NR-II-catalyzed conversion of NR-I to NR-I-phosphate, the transcriptional activator of glnA. When P-II is uridylylated to P-II-UMP, these events are reversed. The sequence is that of Nitrogen regulatory protein P-II (glnB) from Rhizobium etli (strain ATCC 51251 / DSM 11541 / JCM 21823 / NBRC 15573 / CFN 42).